Reading from the N-terminus, the 286-residue chain is GTP cyclohydrolase 1 type 2 homolog (286 aa).

5 residues coordinate a divalent metal cation: histidine 66, histidine 67, aspartate 103, histidine 254, and glutamate 258.

The protein belongs to the GTP cyclohydrolase I type 2/NIF3 family. As to quaternary structure, homohexamer.

In Treponema pallidum (strain Nichols), this protein is GTP cyclohydrolase 1 type 2 homolog.